The chain runs to 28 residues: Fibrinogen alpha chain (28 aa).

The residue at position 3 (serine 3) is a Phosphoserine.

In terms of assembly, heterohexamer; disulfide linked. Contains 2 sets of 3 non-identical chains (alpha, beta and gamma). The 2 heterotrimers are in head to head conformation with the N-termini in a small central domain. Post-translationally, conversion of fibrinogen to fibrin is triggered by thrombin, which cleaves fibrinopeptides A and B from alpha and beta chains, and thus exposes the N-terminal polymerization sites responsible for the formation of the soft clot. The soft clot is converted into the hard clot by factor XIIIA which catalyzes the epsilon-(gamma-glutamyl)lysine cross-linking between gamma chains (stronger) and between alpha chains (weaker) of different monomers. Forms F13A-mediated cross-links between a glutamine and the epsilon-amino group of a lysine residue, forming fibronectin-fibrinogen heteropolymers.

Its subcellular location is the secreted. Functionally, cleaved by the protease thrombin to yield monomers which, together with fibrinogen beta (FGB) and fibrinogen gamma (FGG), polymerize to form an insoluble fibrin matrix. Fibrin has a major function in hemostasis as one of the primary components of blood clots. In addition, functions during the early stages of wound repair to stabilize the lesion and guide cell migration during re-epithelialization. Was originally thought to be essential for platelet aggregation, based on in vitro studies using anticoagulated blood. However, subsequent studies have shown that it is not absolutely required for thrombus formation in vivo. Enhances expression of SELP in activated platelets via an ITGB3-dependent pathway. Maternal fibrinogen is essential for successful pregnancy. Fibrin deposition is also associated with infection, where it protects against IFNG-mediated hemorrhage. May also facilitate the immune response via both innate and T-cell mediated pathways. This is Fibrinogen alpha chain (FGA) from Canis lupus familiaris (Dog).